The following is a 383-amino-acid chain: Putative type I specificity subunit S.MgeORF438P (383 aa).

Residues 1–142 (MTPKLKLNNN…KELEIPFTSN (142 aa)) are TRD1. Positions 143–182 (KNEQHAIANTLSVFDERLENLASLIEINRKLRDEYAHKLF) are conserved region 1. Residues 143–182 (KNEQHAIANTLSVFDERLENLASLIEINRKLRDEYAHKLF) adopt a coiled-coil conformation. The tract at residues 183 to 330 (SLDEAFLSHW…GEIKVPYVKS (148 aa)) is TRD2. Positions 331–370 (FQLQRKAGKIVFLLDQKLDQYKKELSSLTVIRDTLLKKLF) are conserved region 2. The stretch at 331–370 (FQLQRKAGKIVFLLDQKLDQYKKELSSLTVIRDTLLKKLF) forms a coiled coil.

This sequence belongs to the type-I restriction system S methylase family.

Functionally, the specificity (S) subunit of a type I restriction enzyme; this subunit dictates DNA sequence specificity. This bacterium does not encode the associated endonuclease or methylase subunits. In Mycoplasma genitalium (strain ATCC 33530 / DSM 19775 / NCTC 10195 / G37) (Mycoplasmoides genitalium), this protein is Putative type I specificity subunit S.MgeORF438P.